The primary structure comprises 498 residues: Delta(14)-sterol reductase erg24A (498 aa).

4 helical membrane-spanning segments follow: residues 30-50 (LGAF…TFLC), 91-111 (VTVW…FLPG), 136-156 (ILIL…FVVW), and 163-183 (YVQI…FVYA). Asparagine 257 is a glycosylation site (N-linked (GlcNAc...) asparagine). 3 consecutive transmembrane segments (helical) span residues 275-295 (IVLS…MEPA), 302-322 (VIMD…VPFI), and 339-359 (LREI…FRGA). NADP(+) contacts are provided by residues lysine 363, arginine 367, tryptophan 395, and 402–403 (NY). N-linked (GlcNAc...) asparagine glycosylation occurs at asparagine 429. The helical transmembrane segment at 444 to 464 (VRGWGMIFTYFFLVYFGALLI) threads the bilayer. NADP(+)-binding positions include aspartate 470, 474 to 478 (CKSKY), and tyrosine 485.

It belongs to the ERG4/ERG24 family.

It localises to the endoplasmic reticulum membrane. It functions in the pathway steroid metabolism; ergosterol biosynthesis. Its function is as follows. Delta(14)-sterol reductase; part of the third module of ergosterol biosynthesis pathway that includes the late steps of the pathway. Catalyzes the reduction of the C14=C15 double bond within 4,4,24-trimethyl ergosta-8,14,24(28)-trienolto produce 4,4-dimethylfecosterol. The third module or late pathway involves the ergosterol synthesis itself through consecutive reactions that mainly occur in the endoplasmic reticulum (ER) membrane. Firstly, the squalene synthase erg9 catalyzes the condensation of 2 farnesyl pyrophosphate moieties to form squalene, which is the precursor of all steroids. Squalene synthase is crucial for balancing the incorporation of farnesyl diphosphate (FPP) into sterol and nonsterol isoprene synthesis. Secondly, squalene is converted into lanosterol by the consecutive action of the squalene epoxidase erg1 and the lanosterol synthase erg7. Then, the delta(24)-sterol C-methyltransferase erg6 methylates lanosterol at C-24 to produce eburicol. Eburicol is the substrate of the sterol 14-alpha demethylase encoded by cyp51A and cyp51B, to yield 4,4,24-trimethyl ergosta-8,14,24(28)-trienol. The C-14 reductase erg24 then reduces the C14=C15 double bond which leads to 4,4-dimethylfecosterol. A sequence of further demethylations at C-4, involving the C-4 demethylation complex containing the C-4 methylsterol oxidases erg25A or erg25B, the sterol-4-alpha-carboxylate 3-dehydrogenase erg26 and the 3-keto-steroid reductase erg27, leads to the production of fecosterol via 4-methylfecosterol. The C-8 sterol isomerase erg2 then catalyzes the reaction which results in unsaturation at C-7 in the B ring of sterols and thus converts fecosterol to episterol. The sterol-C5-desaturase erg3B then catalyzes the introduction of a C-5 double bond in the B ring to produce 5-dehydroepisterol. The 2 other sterol-C5-desaturases, erg3A and erg3C, seem to be less important in ergosterol biosynthesis. The C-22 sterol desaturase erg5 further converts 5-dehydroepisterol into ergosta-5,7,22,24(28)-tetraen-3beta-ol by forming the C-22(23) double bond in the sterol side chain. Finally, ergosta-5,7,22,24(28)-tetraen-3beta-ol is substrate of the C-24(28) sterol reductases erg4A and erg4B to produce ergosterol. Possible alternative sterol biosynthetic pathways might exist from fecosterol to ergosterol, depending on the activities of the erg3 isoforms. This is Delta(14)-sterol reductase erg24A from Aspergillus fumigatus (strain ATCC MYA-4609 / CBS 101355 / FGSC A1100 / Af293) (Neosartorya fumigata).